The primary structure comprises 279 residues: Bifunctional protein FolD (279 aa).

NADP(+) is bound by residues 164 to 166 (GRS), serine 189, and isoleucine 230.

This sequence belongs to the tetrahydrofolate dehydrogenase/cyclohydrolase family. Homodimer.

It catalyses the reaction (6R)-5,10-methylene-5,6,7,8-tetrahydrofolate + NADP(+) = (6R)-5,10-methenyltetrahydrofolate + NADPH. The catalysed reaction is (6R)-5,10-methenyltetrahydrofolate + H2O = (6R)-10-formyltetrahydrofolate + H(+). The protein operates within one-carbon metabolism; tetrahydrofolate interconversion. In terms of biological role, catalyzes the oxidation of 5,10-methylenetetrahydrofolate to 5,10-methenyltetrahydrofolate and then the hydrolysis of 5,10-methenyltetrahydrofolate to 10-formyltetrahydrofolate. The protein is Bifunctional protein FolD of Agathobacter rectalis (strain ATCC 33656 / DSM 3377 / JCM 17463 / KCTC 5835 / VPI 0990) (Eubacterium rectale).